The sequence spans 297 residues: uncharacterized protein (297 aa).

The tract at residues 46–229 is disordered; the sequence is LGAGGPPPPP…RPPPYIAPPP (184 aa). Over residues 65–81 the composition is skewed to pro residues; sequence PEGPGGPPQHAPPNPPP. The segment covering 90–100 has biased composition (gly residues); the sequence is RGGGAGGAGDG. Residues 106–117 show a composition bias toward acidic residues; that stretch reads DAAEEYGPEDLD. Basic residues predominate over residues 137–151; that stretch reads HQTRGPGRRAKKRLR. The span at 184–201 shows a compositional bias: low complexity; it reads ATPQAAPAAKTTPASPQT. Over residues 219 to 229 the composition is skewed to pro residues; it reads HRPPPYIAPPP.

This is an uncharacterized protein from Torque teno virus (isolate Human/China/CT23F/2001) (TTV).